The primary structure comprises 366 residues: Aminomethyltransferase (366 aa).

The protein belongs to the GcvT family. In terms of assembly, the glycine cleavage system is composed of four proteins: P, T, L and H.

It catalyses the reaction N(6)-[(R)-S(8)-aminomethyldihydrolipoyl]-L-lysyl-[protein] + (6S)-5,6,7,8-tetrahydrofolate = N(6)-[(R)-dihydrolipoyl]-L-lysyl-[protein] + (6R)-5,10-methylene-5,6,7,8-tetrahydrofolate + NH4(+). Its function is as follows. The glycine cleavage system catalyzes the degradation of glycine. The chain is Aminomethyltransferase from Bordetella bronchiseptica (strain ATCC BAA-588 / NCTC 13252 / RB50) (Alcaligenes bronchisepticus).